We begin with the raw amino-acid sequence, 125 residues long: Translation initiation factor 5A (125 aa).

K35 bears the Hypusine mark.

The protein belongs to the eIF-5A family.

The protein resides in the cytoplasm. Functionally, functions by promoting the formation of the first peptide bond. This Methanosphaerula palustris (strain ATCC BAA-1556 / DSM 19958 / E1-9c) protein is Translation initiation factor 5A (eIF5A).